The chain runs to 158 residues: Large ribosomal subunit protein bL35m (158 aa).

The protein belongs to the bacterial ribosomal protein bL35 family.

The protein localises to the mitochondrion. In Caenorhabditis elegans, this protein is Large ribosomal subunit protein bL35m (mrpl-35).